The following is a 223-amino-acid chain: Deoxyribose-phosphate aldolase (223 aa).

The active-site Proton donor/acceptor is D91. K153 serves as the catalytic Schiff-base intermediate with acetaldehyde. The active-site Proton donor/acceptor is the K182.

This sequence belongs to the DeoC/FbaB aldolase family. DeoC type 1 subfamily.

Its subcellular location is the cytoplasm. It catalyses the reaction 2-deoxy-D-ribose 5-phosphate = D-glyceraldehyde 3-phosphate + acetaldehyde. The protein operates within carbohydrate degradation; 2-deoxy-D-ribose 1-phosphate degradation; D-glyceraldehyde 3-phosphate and acetaldehyde from 2-deoxy-alpha-D-ribose 1-phosphate: step 2/2. Its function is as follows. Catalyzes a reversible aldol reaction between acetaldehyde and D-glyceraldehyde 3-phosphate to generate 2-deoxy-D-ribose 5-phosphate. This is Deoxyribose-phosphate aldolase from Yersinia enterocolitica serotype O:8 / biotype 1B (strain NCTC 13174 / 8081).